Here is a 357-residue protein sequence, read N- to C-terminus: Cyclic AMP-responsive element-binding protein 5 (357 aa).

The interval 114-239 (RQDQTPHHHL…FLERNRAAAT (126 aa)) is disordered. Basic residues-rich tracts occupy residues 120–129 (HHHLHSHPHQ) and 138–175 (PYPH…HPAH). Positions 186–195 (TGNQAQVSPA) are enriched in polar residues. The span at 196 to 206 (TQQMQPTQTIQ) shows a compositional bias: low complexity. Residues 218–235 (VVDEDPDERRRKFLERNR) show a composition bias toward basic and acidic residues. Residues 224–287 (DERRRKFLER…AQLKQLLLTH (64 aa)) form the bZIP domain. A basic motif region spans residues 226–246 (RRRKFLERNRAAATRCRQKRK). Residues 252–280 (LEKKAEELTQTNMQLQNEVSMLKNEVAQL) form a leucine-zipper region. The interval 298-318 (ESQGYLSPESSPPASPVPACS) is disordered.

This sequence belongs to the bZIP family. In terms of assembly, binds DNA as a homodimer or as a heterodimer with JUN or ATF2/CREBP1.

The protein resides in the nucleus. In terms of biological role, binds to the cAMP response element and activates transcription. The protein is Cyclic AMP-responsive element-binding protein 5 (Creb5) of Mus musculus (Mouse).